A 271-amino-acid chain; its full sequence is 3-methyl-2-oxobutanoate hydroxymethyltransferase (271 aa).

The Mg(2+) site is built by Asp-49 and Asp-88. Residues 49-50 (DS), Asp-88, and Lys-118 each bind 3-methyl-2-oxobutanoate. Glu-120 contacts Mg(2+). The Proton acceptor role is filled by Glu-187.

This sequence belongs to the PanB family. Homodecamer; pentamer of dimers. The cofactor is Mg(2+).

The protein localises to the cytoplasm. The enzyme catalyses 3-methyl-2-oxobutanoate + (6R)-5,10-methylene-5,6,7,8-tetrahydrofolate + H2O = 2-dehydropantoate + (6S)-5,6,7,8-tetrahydrofolate. Its pathway is cofactor biosynthesis; (R)-pantothenate biosynthesis; (R)-pantoate from 3-methyl-2-oxobutanoate: step 1/2. Functionally, catalyzes the reversible reaction in which hydroxymethyl group from 5,10-methylenetetrahydrofolate is transferred onto alpha-ketoisovalerate to form ketopantoate. This Bartonella bacilliformis (strain ATCC 35685 / KC583 / Herrer 020/F12,63) protein is 3-methyl-2-oxobutanoate hydroxymethyltransferase.